A 438-amino-acid polypeptide reads, in one-letter code: Xylose isomerase (438 aa).

Active-site residues include H103 and D106. Residues E234, E270, H273, D298, D309, D311, and D341 each coordinate Mg(2+).

Belongs to the xylose isomerase family. In terms of assembly, homotetramer. Requires Mg(2+) as cofactor.

Its subcellular location is the cytoplasm. The catalysed reaction is alpha-D-xylose = alpha-D-xylulofuranose. The polypeptide is Xylose isomerase (Bacteroides thetaiotaomicron (strain ATCC 29148 / DSM 2079 / JCM 5827 / CCUG 10774 / NCTC 10582 / VPI-5482 / E50)).